A 578-amino-acid chain; its full sequence is Serine/threonine-protein kinase D6PKL3 (578 aa).

The segment covering 1–24 (MDSSSSVVYVGSSSKSRNFQSKSK) has biased composition (low complexity). A disordered region spans residues 1 to 64 (MDSSSSVVYV…EVIESSVSSV (64 aa)). A compositionally biased stretch (polar residues) spans 25–34 (GSITSFSIDS). Residues 53-64 (SPEVIESSVSSV) are compositionally biased toward low complexity. One can recognise a Protein kinase domain in the interval 182–516 (FKLIKKLGGG…ATEIKQHPFF (335 aa)). ATP contacts are provided by residues 188–196 (LGGGDIGNV) and lysine 211. Aspartate 307 functions as the Proton acceptor in the catalytic mechanism. The segment at 325–426 (DFDLSLRCAV…VGTHEYLAPE (102 aa)) is activation loop. A PIF motif is present at residues 575-578 (IDFF).

This sequence belongs to the protein kinase superfamily. AGC Ser/Thr protein kinase family. As to expression, expressed predominantly in root tissue with lower levels found in leaf, stem, seed and flower.

The protein localises to the cell membrane. The catalysed reaction is L-seryl-[protein] + ATP = O-phospho-L-seryl-[protein] + ADP + H(+). It catalyses the reaction L-threonyl-[protein] + ATP = O-phospho-L-threonyl-[protein] + ADP + H(+). In terms of biological role, protein kinase that regulates the auxin transport activity of PIN auxin efflux facilitators by direct phosphorylation. D6PK-mediated PIN phosphorylation promotes auxin transport in the hypocotyl and this is a prerequisite for PHOT1-dependent hypocotyl bending. The polypeptide is Serine/threonine-protein kinase D6PKL3 (D6PKL3) (Arabidopsis thaliana (Mouse-ear cress)).